Consider the following 1029-residue polypeptide: Beta-galactosidase 2 (1029 aa).

2 residues coordinate substrate: asparagine 104 and aspartate 203. Aspartate 203 contributes to the Na(+) binding site. Residues glutamate 418, histidine 420, and glutamate 463 each contribute to the Mg(2+) site. Substrate is bound by residues glutamate 463 and 539 to 542; that span reads EYAH. The active-site Proton donor is glutamate 463. The active-site Nucleophile is glutamate 539. Asparagine 599 is a binding site for Mg(2+). Positions 603 and 606 each coordinate Na(+). Substrate-binding residues include asparagine 606 and tryptophan 1004.

Belongs to the glycosyl hydrolase 2 family. In terms of assembly, homotetramer. Mg(2+) serves as cofactor. Na(+) is required as a cofactor.

It carries out the reaction Hydrolysis of terminal non-reducing beta-D-galactose residues in beta-D-galactosides.. This Enterobacter cloacae protein is Beta-galactosidase 2.